The sequence spans 370 residues: Glutamate 5-kinase (370 aa).

Lys11 contacts ATP. Positions 52, 139, and 151 each coordinate substrate. ATP is bound by residues 171–172 (TD) and 213–219 (TGGMATK). In terms of domain architecture, PUA spans 278-356 (TGKLLLDAGA…DQIVQILGYE (79 aa)).

Belongs to the glutamate 5-kinase family.

The protein resides in the cytoplasm. It carries out the reaction L-glutamate + ATP = L-glutamyl 5-phosphate + ADP. It functions in the pathway amino-acid biosynthesis; L-proline biosynthesis; L-glutamate 5-semialdehyde from L-glutamate: step 1/2. Catalyzes the transfer of a phosphate group to glutamate to form L-glutamate 5-phosphate. In Synechococcus sp. (strain ATCC 27144 / PCC 6301 / SAUG 1402/1) (Anacystis nidulans), this protein is Glutamate 5-kinase.